A 1002-amino-acid polypeptide reads, in one-letter code: Lon protease homolog, mitochondrial (1002 aa).

Residues 102–313 (VIALPLPHRP…LTLELVKKEM (212 aa)) form the Lon N-terminal domain. 468–475 (GPPGVGKT) serves as a coordination point for ATP. One can recognise a Lon proteolytic domain in the interval 811–995 (QTPVGVVMGL…NEIFDIAFQS (185 aa)). Active-site residues include serine 901 and lysine 944.

It belongs to the peptidase S16 family. As to quaternary structure, homohexamer or homoheptamer. Organized in a ring with a central cavity.

It is found in the mitochondrion matrix. The catalysed reaction is Hydrolysis of proteins in presence of ATP.. ATP-dependent serine protease that mediates the selective degradation of misfolded, unassembled or oxidatively damaged polypeptides as well as certain short-lived regulatory proteins in the mitochondrial matrix. May also have a chaperone function in the assembly of inner membrane protein complexes. Participates in the regulation of mitochondrial gene expression and in the maintenance of the integrity of the mitochondrial genome. Binds to mitochondrial DNA in a site-specific manner. The polypeptide is Lon protease homolog, mitochondrial (Oryza sativa subsp. indica (Rice)).